Consider the following 961-residue polypeptide: DNA replication licensing factor MCM2 (961 aa).

Polar residues predominate over residues 1–17 (MDDSENNAPSTPGSPGF). 2 disordered regions span residues 1–81 (MDDS…FNDN) and 120–220 (AEAE…EEDE). Residues 39–78 (SDDDDDDVVGAEEAEVDPNVLPEDDGVVAAEEEEDGEDLF) are compositionally biased toward acidic residues. Basic and acidic residues-rich tracts occupy residues 120 to 146 (AEAELDARDVRTGAAPDRKLPRMLHDQ) and 166 to 176 (PPREPRTPRSD). Residues 205–220 (QTDDDPYEDEFDEEDE) show a composition bias toward acidic residues. Residues 380 to 406 (CSKCGTVLGPFFQNSYTEVKVGSCPEC) form a C4-type zinc finger. One can recognise an MCM domain in the interval 524–730 (IGERIVKSIA…FTDEMLARFV (207 aa)). Residue 574 to 581 (GDPGTAKS) participates in ATP binding. The short motif at 706–709 (SRFD) is the Arginine finger element.

It belongs to the MCM family. Component of the minichromosome maintenance (MCM) complex, a heterotetramer composed of MCM2, MCM3, MCM4, MCM5, MCM6 and MCM7.

The protein resides in the nucleus. It catalyses the reaction ATP + H2O = ADP + phosphate + H(+). Functionally, probable component of the MCM2-7 complex (MCM complex) that may function as a DNA helicase and which is essential to undergo a single round of replication initiation and elongation per cell cycle in eukaryotic cells. In Oryza sativa subsp. indica (Rice), this protein is DNA replication licensing factor MCM2.